The primary structure comprises 144 residues: Small ribosomal subunit protein eS12 (144 aa).

The protein belongs to the eukaryotic ribosomal protein eS12 family.

The protein is Small ribosomal subunit protein eS12 (RPS12) of Trypanosoma brucei brucei.